The following is a 471-amino-acid chain: DnaJ protein P58IPK homolog B (471 aa).

The first 24 residues, 1 to 24 (MARWPWRWRVLLPLLLLHSSPVFA), serve as a signal peptide directing secretion. 8 TPR repeats span residues 32 to 65 (PSTL…DPNH), 66 to 99 (SEAY…KPGS), 112 to 146 (AQNA…SPNC), 148 to 180 (KAKL…DEDN), 181 to 214 (LDAL…DPEH), 227 to 260 (LLKK…DPDH), 265 to 298 (VHLY…DGEL), and 300 to 332 (DALT…SPQD). A glycan (N-linked (GlcNAc...) asparagine) is linked at Asn64. The 67-residue stretch at 353 to 419 (DWYKILGISK…DKRVRYDRGE (67 aa)) folds into the J domain.

Interacts with BIP1.

It is found in the endoplasmic reticulum lumen. In terms of biological role, may play a role in protein folding in the endoplasmic reticulum. This Oryza sativa subsp. japonica (Rice) protein is DnaJ protein P58IPK homolog B.